We begin with the raw amino-acid sequence, 296 residues long: Light-independent protochlorophyllide reductase iron-sulfur ATP-binding protein (296 aa).

Residues 39–44 (GIGKST) and K68 contribute to the ATP site. S43 contributes to the Mg(2+) binding site. Residues C124 and C158 each coordinate [4Fe-4S] cluster. 209-210 (NR) contributes to the ATP binding site.

Belongs to the NifH/BchL/ChlL family. In terms of assembly, homodimer. Protochlorophyllide reductase is composed of three subunits; ChlL, ChlN and ChlB. The cofactor is [4Fe-4S] cluster.

The catalysed reaction is chlorophyllide a + oxidized 2[4Fe-4S]-[ferredoxin] + 2 ADP + 2 phosphate = protochlorophyllide a + reduced 2[4Fe-4S]-[ferredoxin] + 2 ATP + 2 H2O. Its pathway is porphyrin-containing compound metabolism; chlorophyll biosynthesis (light-independent). Its function is as follows. Component of the dark-operative protochlorophyllide reductase (DPOR) that uses Mg-ATP and reduced ferredoxin to reduce ring D of protochlorophyllide (Pchlide) to form chlorophyllide a (Chlide). This reaction is light-independent. The L component serves as a unique electron donor to the NB-component of the complex, and binds Mg-ATP. The protein is Light-independent protochlorophyllide reductase iron-sulfur ATP-binding protein of Synechococcus sp. (strain CC9605).